We begin with the raw amino-acid sequence, 442 residues long: F-box/FBD/LRR-repeat protein At3g14710 (442 aa).

The 48-residue stretch at 26–73 folds into the F-box domain; the sequence is DKFSSLLESVVSIILSQLPTAEAVSTSVLSKSWKNIWTNITDLHFDDT. 3 LRR repeats span residues 126–147, 151–172, and 173–194; these read NLQRLVVTCNDLEIISFSSLFP, SLVELRLRTKSILDISAPAILP, and NLKFLSLEDARIFNMSSVSKNL. In terms of domain architecture, FBD spans 370-414; the sequence is VESPDCVTTMLKVLQIRNFKPNRLQISVLRYVLDNAEILGSVILS.

This Arabidopsis thaliana (Mouse-ear cress) protein is F-box/FBD/LRR-repeat protein At3g14710.